We begin with the raw amino-acid sequence, 67 residues long: uncharacterized protein (67 aa).

2 consecutive transmembrane segments (helical) span residues 13–32 (IACLRSLSIKILIICHGFIV) and 42–64 (RLTNFFSIMILLTFSNFSRTLGL).

It localises to the membrane. This is an uncharacterized protein from Saccharomyces cerevisiae (strain ATCC 204508 / S288c) (Baker's yeast).